The following is a 488-amino-acid chain: Ribulose bisphosphate carboxylase large chain (488 aa).

The substrate site is built by asparagine 127 and threonine 177. The active-site Proton acceptor is the lysine 179. Lysine 181 provides a ligand contact to substrate. Residues lysine 205, aspartate 207, and glutamate 208 each coordinate Mg(2+). Position 205 is an N6-carboxylysine (lysine 205). Histidine 297 serves as the catalytic Proton acceptor. Substrate-binding residues include arginine 298, histidine 330, and serine 382.

The protein belongs to the RuBisCO large chain family. Type I subfamily. Heterohexadecamer of 8 large chains and 8 small chains. The cofactor is Mg(2+).

Its subcellular location is the plastid. The protein resides in the chloroplast. The catalysed reaction is 2 (2R)-3-phosphoglycerate + 2 H(+) = D-ribulose 1,5-bisphosphate + CO2 + H2O. It catalyses the reaction D-ribulose 1,5-bisphosphate + O2 = 2-phosphoglycolate + (2R)-3-phosphoglycerate + 2 H(+). In terms of biological role, ruBisCO catalyzes two reactions: the carboxylation of D-ribulose 1,5-bisphosphate, the primary event in carbon dioxide fixation, as well as the oxidative fragmentation of the pentose substrate in the photorespiration process. Both reactions occur simultaneously and in competition at the same active site. The polypeptide is Ribulose bisphosphate carboxylase large chain (Rhodomonas salina (Cryptomonas salina)).